A 177-amino-acid polypeptide reads, in one-letter code: Peptide methionine sulfoxide reductase MsrA (177 aa).

Residue Cys-12 is part of the active site.

Belongs to the MsrA Met sulfoxide reductase family.

The catalysed reaction is L-methionyl-[protein] + [thioredoxin]-disulfide + H2O = L-methionyl-(S)-S-oxide-[protein] + [thioredoxin]-dithiol. The enzyme catalyses [thioredoxin]-disulfide + L-methionine + H2O = L-methionine (S)-S-oxide + [thioredoxin]-dithiol. In terms of biological role, has an important function as a repair enzyme for proteins that have been inactivated by oxidation. Catalyzes the reversible oxidation-reduction of methionine sulfoxide in proteins to methionine. The chain is Peptide methionine sulfoxide reductase MsrA from Halobacterium salinarum (strain ATCC 29341 / DSM 671 / R1).